We begin with the raw amino-acid sequence, 295 residues long: UDP-N-acetylenolpyruvoylglucosamine reductase (295 aa).

Residues 27 to 194 (GVGGEAEVWF…TRVRLKLRRS (168 aa)) enclose the FAD-binding PCMH-type domain. Arginine 174 is a catalytic residue. The active-site Proton donor is cysteine 221. Glutamate 287 is a catalytic residue.

This sequence belongs to the MurB family. FAD serves as cofactor.

It localises to the cytoplasm. It carries out the reaction UDP-N-acetyl-alpha-D-muramate + NADP(+) = UDP-N-acetyl-3-O-(1-carboxyvinyl)-alpha-D-glucosamine + NADPH + H(+). The protein operates within cell wall biogenesis; peptidoglycan biosynthesis. Cell wall formation. The chain is UDP-N-acetylenolpyruvoylglucosamine reductase from Deinococcus geothermalis (strain DSM 11300 / CIP 105573 / AG-3a).